A 919-amino-acid polypeptide reads, in one-letter code: Rho guanine nucleotide exchange factor 1 (919 aa).

In terms of domain architecture, RGSL spans 39 to 230; sequence DQNSQFQSLE…SLYMRHLGVR (192 aa). Residues 247-402 are disordered; the sequence is VMGNRRSDEP…PPGWRELVPS (156 aa). Residues 281 to 310 are compositionally biased toward basic and acidic residues; the sequence is DCRHLKVEVDEKPGPADRKGSLGISSRDRT. Positions 363 to 379 are enriched in acidic residues; that stretch reads STEDNGETESPEPGDDG. Phosphoserine is present on Ser372. The 190-residue stretch at 414–603 folds into the DH domain; sequence KRQEVISELL…REILHHVNQA (190 aa). A PH domain is found at 645 to 758; it reads KLVHEGPLTW…WCALITETAG (114 aa). Position 693 is a phosphothreonine (Thr693). Tyr736 is modified (phosphotyrosine; by JAK2). 2 disordered regions span residues 761 to 800 and 839 to 865; these read KVPA…PADA and TEED…PTHT. Low complexity predominate over residues 775 to 787; the sequence is PSSTREPLLSSSE. The stretch at 864-893 forms a coiled coil; it reads HTQEVEENLLSLEVVIKQLEELEEEFCRLR. Ser904 is modified (phosphoserine).

As to quaternary structure, interacts with RHOA, GNA12 and GNA13. Homooligomerizes through the coiled coil region. Interacts with CTNNAL1. May interact with CCPG1. In terms of processing, phosphorylated by PKCA. Angiotensin-2 induced Tyr-736 phosphorylation is mediated by JAK2.

It localises to the cytoplasm. The protein resides in the membrane. Functionally, seems to play a role in the regulation of RhoA GTPase by guanine nucleotide-binding alpha-12 (GNA12) and alpha-13 (GNA13) subunits. Acts as a GTPase-activating protein (GAP) for GNA12 and GNA13, and as guanine nucleotide exchange factor (GEF) for RhoA GTPase. Activated G alpha 13/GNA13 stimulates the RhoGEF activity through interaction with the RGS-like domain. This GEF activity is inhibited by binding to activated GNA12. Mediates angiotensin-2-induced RhoA activation. In lymphoid follicles, may trigger activation of GNA13 as part of S1PR2-dependent signaling pathway that leads to inhibition of germinal center (GC) B cell growth and migration outside the GC niche. The polypeptide is Rho guanine nucleotide exchange factor 1 (Arhgef1) (Rattus norvegicus (Rat)).